We begin with the raw amino-acid sequence, 336 residues long: tRNA N6-adenosine threonylcarbamoyltransferase (336 aa).

The Fe cation site is built by His111 and His115. Residues Leu134 to Gly138, Asp167, Gly180, and Asn270 each bind substrate. Position 298 (Asp298) interacts with Fe cation.

The protein belongs to the KAE1 / TsaD family. The cofactor is Fe(2+).

Its subcellular location is the cytoplasm. The enzyme catalyses L-threonylcarbamoyladenylate + adenosine(37) in tRNA = N(6)-L-threonylcarbamoyladenosine(37) in tRNA + AMP + H(+). Functionally, required for the formation of a threonylcarbamoyl group on adenosine at position 37 (t(6)A37) in tRNAs that read codons beginning with adenine. Is involved in the transfer of the threonylcarbamoyl moiety of threonylcarbamoyl-AMP (TC-AMP) to the N6 group of A37, together with TsaE and TsaB. TsaD likely plays a direct catalytic role in this reaction. In Acinetobacter baumannii (strain SDF), this protein is tRNA N6-adenosine threonylcarbamoyltransferase.